We begin with the raw amino-acid sequence, 444 residues long: Homogentisate 1,2-dioxygenase (444 aa).

The active-site Proton acceptor is the histidine 298. Residues histidine 341 and glutamate 347 each contribute to the Fe cation site. Homogentisate contacts are provided by tyrosine 356 and histidine 377. Histidine 377 contacts Fe cation.

Belongs to the homogentisate dioxygenase family. In terms of assembly, hexamer; dimer of trimers. Fe cation is required as a cofactor.

It catalyses the reaction homogentisate + O2 = 4-maleylacetoacetate + H(+). Its pathway is amino-acid degradation; L-phenylalanine degradation; acetoacetate and fumarate from L-phenylalanine: step 4/6. Functionally, involved in the catabolism of homogentisate (2,5-dihydroxyphenylacetate or 2,5-OH-PhAc), a central intermediate in the degradation of phenylalanine and tyrosine. Catalyzes the oxidative ring cleavage of the aromatic ring of homogentisate to yield maleylacetoacetate. This is Homogentisate 1,2-dioxygenase from Burkholderia ambifaria (strain ATCC BAA-244 / DSM 16087 / CCUG 44356 / LMG 19182 / AMMD) (Burkholderia cepacia (strain AMMD)).